Reading from the N-terminus, the 86-residue chain is Acyl carrier protein (86 aa).

A Carrier domain is found at 2–82 (ATVFERVKKV…AVVDYLKSKG (81 aa)). Serine 37 bears the O-(pantetheine 4'-phosphoryl)serine mark.

This sequence belongs to the acyl carrier protein (ACP) family. In terms of processing, 4'-phosphopantetheine is transferred from CoA to a specific serine of apo-ACP by AcpS. This modification is essential for activity because fatty acids are bound in thioester linkage to the sulfhydryl of the prosthetic group.

The protein resides in the cytoplasm. Its pathway is lipid metabolism; fatty acid biosynthesis. Carrier of the growing fatty acid chain in fatty acid biosynthesis. The protein is Acyl carrier protein of Dehalococcoides mccartyi (strain ATCC BAA-2100 / JCM 16839 / KCTC 5957 / BAV1).